The sequence spans 126 residues: Small ribosomal subunit protein uS12 (126 aa).

A 3-methylthioaspartic acid modification is found at Asp-89. The interval Arg-99–Lys-126 is disordered. Basic residues predominate over residues Gly-113–Lys-126.

This sequence belongs to the universal ribosomal protein uS12 family. Part of the 30S ribosomal subunit. Contacts proteins S8 and S17. May interact with IF1 in the 30S initiation complex.

With S4 and S5 plays an important role in translational accuracy. Functionally, interacts with and stabilizes bases of the 16S rRNA that are involved in tRNA selection in the A site and with the mRNA backbone. Located at the interface of the 30S and 50S subunits, it traverses the body of the 30S subunit contacting proteins on the other side and probably holding the rRNA structure together. The combined cluster of proteins S8, S12 and S17 appears to hold together the shoulder and platform of the 30S subunit. The polypeptide is Small ribosomal subunit protein uS12 (Legionella pneumophila (strain Paris)).